A 218-amino-acid polypeptide reads, in one-letter code: Large ribosomal subunit protein uL3 (218 aa).

Residues Gly-127–Gly-167 are disordered.

This sequence belongs to the universal ribosomal protein uL3 family. In terms of assembly, part of the 50S ribosomal subunit. Forms a cluster with proteins L14 and L19.

In terms of biological role, one of the primary rRNA binding proteins, it binds directly near the 3'-end of the 23S rRNA, where it nucleates assembly of the 50S subunit. The protein is Large ribosomal subunit protein uL3 of Prochlorococcus marinus (strain NATL1A).